The following is a 306-amino-acid chain: Ribonuclease Z (306 aa).

The Zn(2+) site is built by His63, His65, Asp67, His68, His141, Asp211, and His269. Asp67 acts as the Proton acceptor in catalysis.

This sequence belongs to the RNase Z family. As to quaternary structure, homodimer. Requires Zn(2+) as cofactor.

It carries out the reaction Endonucleolytic cleavage of RNA, removing extra 3' nucleotides from tRNA precursor, generating 3' termini of tRNAs. A 3'-hydroxy group is left at the tRNA terminus and a 5'-phosphoryl group is left at the trailer molecule.. Its function is as follows. Zinc phosphodiesterase, which displays some tRNA 3'-processing endonuclease activity. Probably involved in tRNA maturation, by removing a 3'-trailer from precursor tRNA. In Staphylococcus aureus (strain MSSA476), this protein is Ribonuclease Z.